A 129-amino-acid chain; its full sequence is Small ribosomal subunit protein uS9 (129 aa).

Residues 110–129 (VERKKYGKKKARKSFQFSKR) are disordered. Over residues 114-129 (KYGKKKARKSFQFSKR) the composition is skewed to basic residues.

Belongs to the universal ribosomal protein uS9 family.

The polypeptide is Small ribosomal subunit protein uS9 (Chlorobaculum parvum (strain DSM 263 / NCIMB 8327) (Chlorobium vibrioforme subsp. thiosulfatophilum)).